Here is a 445-residue protein sequence, read N- to C-terminus: Phosphoglucosamine mutase (445 aa).

Ser102 (phosphoserine intermediate) is an active-site residue. Mg(2+) is bound by residues Ser102, Asp241, Asp243, and Asp245. The residue at position 102 (Ser102) is a Phosphoserine.

This sequence belongs to the phosphohexose mutase family. The cofactor is Mg(2+). Activated by phosphorylation.

It carries out the reaction alpha-D-glucosamine 1-phosphate = D-glucosamine 6-phosphate. In terms of biological role, catalyzes the conversion of glucosamine-6-phosphate to glucosamine-1-phosphate. This is Phosphoglucosamine mutase from Zymomonas mobilis subsp. mobilis (strain ATCC 31821 / ZM4 / CP4).